The following is a 326-amino-acid chain: DNA-directed RNA polymerase subunit alpha (326 aa).

The tract at residues 1 to 231 (MQSNALLKPR…DQLSVFADLE (231 aa)) is alpha N-terminal domain (alpha-NTD). The interval 245–326 (IDPVLLRPVD…WPPAGLEKLG (82 aa)) is alpha C-terminal domain (alpha-CTD).

Belongs to the RNA polymerase alpha chain family. In terms of assembly, homodimer. The RNAP catalytic core consists of 2 alpha, 1 beta, 1 beta' and 1 omega subunit. When a sigma factor is associated with the core the holoenzyme is formed, which can initiate transcription.

The enzyme catalyses RNA(n) + a ribonucleoside 5'-triphosphate = RNA(n+1) + diphosphate. In terms of biological role, DNA-dependent RNA polymerase catalyzes the transcription of DNA into RNA using the four ribonucleoside triphosphates as substrates. The polypeptide is DNA-directed RNA polymerase subunit alpha (Azoarcus sp. (strain BH72)).